A 199-amino-acid polypeptide reads, in one-letter code: Recombination protein RecR (199 aa).

A C4-type zinc finger spans residues Cys57 to Cys72. Positions Glu81–Pro176 constitute a Toprim domain.

Belongs to the RecR family.

Its function is as follows. May play a role in DNA repair. It seems to be involved in an RecBC-independent recombinational process of DNA repair. It may act with RecF and RecO. In Shewanella sediminis (strain HAW-EB3), this protein is Recombination protein RecR.